The sequence spans 308 residues: Dioxygenase peniF (308 aa).

Fe cation-binding residues include His-144 and His-225.

The protein belongs to the PhyH family. As to quaternary structure, homodimer. It depends on Fe cation as a cofactor.

Dioxygenase; part of the gene cluster that mediates the biosynthesis of penifulvin A, a potent insecticidal sesquiterpene that features a [5.5.5.6]dioxafenestrane ring. The first step of the pathway is performed by the sesquiterpene cyclase peniA that generates the angular triquinane scaffold silphinene via cyclization of the linear farnesyl pyrophosphate (FPP). The cytochrome P450 monooxygenase peniB and the flavin-dependent monooxygenase peniC then catalyze a series of oxidation reactions to transform silphinene into penifulvin A. The dioxygenases peniD and peniF, as well as the acetyltransferase peniE, do not seem to be involved in the biosynthesis of penifulvin A. This chain is Dioxygenase peniF, found in Penicillium patulum (Penicillium griseofulvum).